The following is a 280-amino-acid chain: Secreted RxLR effector protein 39 (280 aa).

A signal peptide spans 1–19 (MRGAYYVAIALLIVASCSA). Positions 49 to 70 (RVLRGSRDLKNKWAVHAGGEDR) match the RxLR-dEER motif. The segment at 229–249 (EVKARSSKRQRTNPMLNNMDG) is disordered.

The protein belongs to the RxLR effector family.

The protein localises to the secreted. It is found in the host nucleus. Its function is as follows. Secreted effector that completely suppresses the host cell death induced by cell death-inducing proteins. The sequence is that of Secreted RxLR effector protein 39 from Plasmopara viticola (Downy mildew of grapevine).